Consider the following 449-residue polypeptide: UDP-N-acetylmuramoylalanine--D-glutamate ligase (449 aa).

Residue 118-124 (GTNGKTT) participates in ATP binding.

It belongs to the MurCDEF family.

The protein resides in the cytoplasm. The catalysed reaction is UDP-N-acetyl-alpha-D-muramoyl-L-alanine + D-glutamate + ATP = UDP-N-acetyl-alpha-D-muramoyl-L-alanyl-D-glutamate + ADP + phosphate + H(+). The protein operates within cell wall biogenesis; peptidoglycan biosynthesis. Its function is as follows. Cell wall formation. Catalyzes the addition of glutamate to the nucleotide precursor UDP-N-acetylmuramoyl-L-alanine (UMA). The sequence is that of UDP-N-acetylmuramoylalanine--D-glutamate ligase from Staphylococcus aureus (strain MSSA476).